The sequence spans 110 residues: Phosphoribosyl-ATP pyrophosphatase (110 aa).

The protein belongs to the PRA-PH family.

The protein localises to the cytoplasm. It catalyses the reaction 1-(5-phospho-beta-D-ribosyl)-ATP + H2O = 1-(5-phospho-beta-D-ribosyl)-5'-AMP + diphosphate + H(+). Its pathway is amino-acid biosynthesis; L-histidine biosynthesis; L-histidine from 5-phospho-alpha-D-ribose 1-diphosphate: step 2/9. The polypeptide is Phosphoribosyl-ATP pyrophosphatase (Stutzerimonas stutzeri (strain A1501) (Pseudomonas stutzeri)).